The primary structure comprises 290 residues: Protein EURL homolog (290 aa).

The segment at 185–206 (SHSQAQKTEETSSGPEGTIQTQ) is disordered. Positions 228–251 (AKLQQRIQEVFEELTHQVQEKDSL) form a coiled coil.

It belongs to the EURL family. As to quaternary structure, interacts with CCDC85B. In terms of tissue distribution, expressed in brain (at protein level). Expressed in neural progenitor cells and postmitotic neurons of the embryonic cerebral cortex.

Its function is as follows. Plays a role in cortical progenitor cell proliferation and differentiation. Promotes dendritic spine development of post-migratory cortical projection neurons by modulating the beta-catenin signaling pathway. The sequence is that of Protein EURL homolog from Mus musculus (Mouse).